The sequence spans 609 residues: Zinc metalloproteinase-disintegrin-like VAP2B (609 aa).

An N-terminal signal peptide occupies residues 1 to 20 (MIQVLLVTICLAAFPYQGSS). The propeptide occupies 21-189 (IILESGNVND…KKASQLVVTA (169 aa)). Position 190 is a pyrrolidone carboxylic acid (Glu) (Glu190). One can recognise a Peptidase M12B domain in the interval 198-393 (RFVELFLVVD…HNPECILNEP (196 aa)). Ca(2+)-binding residues include Glu201 and Asp285. Intrachain disulfides connect Cys308–Cys388, Cys348–Cys372, and Cys350–Cys355. Zn(2+) is bound at residue His333. The active site involves Glu334. Zn(2+) contacts are provided by His337 and His343. Asn371 carries an N-linked (GlcNAc...) asparagine glycan. Ca(2+) is bound by residues Cys388, Asn391, Val403, Asn406, Leu408, Glu410, Glu413, and Asp416. A Disintegrin domain is found at 401 to 487 (PPVCGNELLE…ECPADVFHKN (87 aa)). 22 disulfide bridges follow: Cys404/Cys423, Cys404/Cys433, Cys415/Cys428, Cys415/Cys433, Cys417/Cys423, Cys427/Cys450, Cys441/Cys447, Cys446/Cys472, Cys459/Cys479, Cys466/Cys491, Cys466/Cys498, Cys491/Cys503, Cys498/Cys503, Cys510/Cys525, Cys510/Cys560, Cys525/Cys571, Cys538/Cys548, Cys548/Cys555, Cys555/Cys597, Cys560/Cys571, Cys591/Cys602, and Cys597/Cys602. The interval 459–472 (CRASMSECDPAEHC) is inhibits platelet aggregation. The D/ECD-tripeptide motif lies at 465 to 467 (ECD). Residues Asp467, Pro468, Glu470, Asp482, and Val483 each contribute to the Ca(2+) site.

It belongs to the venom metalloproteinase (M12B) family. P-III subfamily. P-IIIb sub-subfamily. Monomer or heterodimer; non-covalently linked. Interacts with fibrillar collagen. The cofactor is Zn(2+). Post-translationally, the N-terminus is blocked. In terms of tissue distribution, expressed by the venom gland.

It is found in the secreted. Functionally, zinc metalloprotease that abolishes platelet aggregation induced by collagen, but has no effect on platelet aggregation induced by ADP or thromboxane analog. This inhibition may be due to its ability to bind collagen and block the binding site on collagen for platelets and/or to its ability to bind to the platelet alpha-2/beta-1 collagen receptor (ITGA2/ITGB1) to block its interaction with collagen and hence prevent platelet stimulation. In terms of biological role, abolishes platelet aggregation induced by collagen (IC(50)=66 nM) but not ADP-stimulated platelet aggregation. This inhibition may be due to its ability to bind collagen and block the binding site on collagen for platelets and/or to its ability to bind to the platelet alpha-2/beta-1 collagen receptor (ITGA2/ITGB1) to block its interaction with collagen and hence prevent platelet stimulation. This is Zinc metalloproteinase-disintegrin-like VAP2B from Crotalus atrox (Western diamondback rattlesnake).